The sequence spans 153 residues: Ribonuclease H (153 aa).

Positions 4-145 (SVDSVELFTD…ADQLANRGVD (142 aa)) constitute an RNase H type-1 domain. Mg(2+)-binding residues include D13, E51, D73, and D137.

Belongs to the RNase H family. As to quaternary structure, monomer. Mg(2+) serves as cofactor.

The protein localises to the cytoplasm. It carries out the reaction Endonucleolytic cleavage to 5'-phosphomonoester.. Endonuclease that specifically degrades the RNA of RNA-DNA hybrids. This Pseudomonas fluorescens (strain Pf0-1) protein is Ribonuclease H.